The chain runs to 1642 residues: Mitochondrial 3' processome subunit 2 (1642 aa).

A mitochondrion-targeting transit peptide spans 1–27 (MGLPFLCHTRVCLFSNKIPFVLCGSRF). Disordered regions lie at residues 43–69 (ETLN…PQKK) and 745–772 (KGEK…LSGP). Residues 49-65 (ELSSPSTSKEPSVGSDS) show a composition bias toward polar residues.

Component of the mitochondrial 3' processome (MPsome) complex composed at least of terminal uridylyltransferase KRET1/TUT1, 3'-5' exonuclease DSS1, MPSS1, MPSS2 and MPSS3. Within the complex, interacts with DSS1.

The protein resides in the mitochondrion. Functionally, as part of the mitochondrial 3' processome (MPsome), involved in the maturation of guided RNA (gRNA) precursors. This is Mitochondrial 3' processome subunit 2 from Trypanosoma brucei brucei.